A 386-amino-acid chain; its full sequence is Histidinol-phosphate aminotransferase (386 aa).

Polar residues predominate over residues M1–R11. The segment at M1 to V22 is disordered. An N6-(pyridoxal phosphate)lysine modification is found at K248.

The protein belongs to the class-II pyridoxal-phosphate-dependent aminotransferase family. Histidinol-phosphate aminotransferase subfamily. Homodimer. The cofactor is pyridoxal 5'-phosphate.

The enzyme catalyses L-histidinol phosphate + 2-oxoglutarate = 3-(imidazol-4-yl)-2-oxopropyl phosphate + L-glutamate. Its pathway is amino-acid biosynthesis; L-histidine biosynthesis; L-histidine from 5-phospho-alpha-D-ribose 1-diphosphate: step 7/9. This chain is Histidinol-phosphate aminotransferase, found in Moorella thermoacetica (strain ATCC 39073 / JCM 9320).